The chain runs to 413 residues: MINYNKKTLKDVDLKDKTVIVRVDFNVPIKDNKVIDDTRIVQALDTIKYLIEQNCKIVLLSHLSRIKSLEDISSKKKSLRPVYENLKTKLNNVKFLEENVGYDVVEAVKQLKHQEVLLLENTRYNDVDNQGEVVKKESKNSPELGRFWASLADVFVNDAFGTSHRAHASNVGIAANISQSCIGFLVQKELEALSKLTNNPQRPFVVILGGAKVSDKLKVIESLLKSADQILIGGGMVNTFNKAKGYHIGKSLFEPEMLETAKKILAEDKDNKIILATDQMVTKASTITDIKTAPAGKCVFAKDEAENEDFEALDIGDESIKTFKSYIAKAKSIFWNGPLGVFENPNYERGSYEIAKAISESDSYSVIGGGDSAAAANQFKLADKFSFVSTGGGASLTFMEQTVLPGIEAIQSK.

Residues 24 to 26, arginine 39, 62 to 65, arginine 123, and arginine 165 each bind substrate; these read DFN and HLSR. Residues lysine 216, glutamate 343, and 369–372 each bind ATP; that span reads GGDS.

The protein belongs to the phosphoglycerate kinase family. As to quaternary structure, monomer.

It is found in the cytoplasm. It catalyses the reaction (2R)-3-phosphoglycerate + ATP = (2R)-3-phospho-glyceroyl phosphate + ADP. The protein operates within carbohydrate degradation; glycolysis; pyruvate from D-glyceraldehyde 3-phosphate: step 2/5. The polypeptide is Phosphoglycerate kinase (Mycoplasmoides gallisepticum (strain R(low / passage 15 / clone 2)) (Mycoplasma gallisepticum)).